Consider the following 215-residue polypeptide: Adenylate kinase (215 aa).

An ATP-binding site is contributed by 10–15 (GAGKGT). The interval 30-59 (STGDMFRAAMKNETEMGKLAKSFIDKGELV) is NMP. AMP is bound by residues T31, R36, 57-59 (ELV), 86-89 (GYPR), and Q93. The interval 127 to 165 (GRYICRNCGATYHKIFNPTKVEGVCDVCGSHDLYQRADD) is LID. Position 128 (R128) interacts with ATP. C131 and C134 together coordinate Zn(2+). Position 137 to 138 (137 to 138 (TY)) interacts with ATP. Zn(2+)-binding residues include C151 and C154. The AMP site is built by R162 and R173. ATP is bound at residue Q201.

Belongs to the adenylate kinase family. In terms of assembly, monomer.

The protein localises to the cytoplasm. It catalyses the reaction AMP + ATP = 2 ADP. It functions in the pathway purine metabolism; AMP biosynthesis via salvage pathway; AMP from ADP: step 1/1. In terms of biological role, catalyzes the reversible transfer of the terminal phosphate group between ATP and AMP. Plays an important role in cellular energy homeostasis and in adenine nucleotide metabolism. The protein is Adenylate kinase of Lactococcus lactis subsp. lactis (strain IL1403) (Streptococcus lactis).